The primary structure comprises 97 residues: Lipolysis-activating peptide 1-alpha chain (97 aa).

An N-terminal signal peptide occupies residues 1–21 (MNIMLFCSVFILVSLTGLSVS). Residues 25 to 88 (PGNYPMSLYG…FWAAHKNHCK (64 aa)) enclose the LCN-type CS-alpha/beta domain. 3 disulfide bridges follow: cysteine 39–cysteine 62, cysteine 48–cysteine 67, and cysteine 52–cysteine 69.

This sequence belongs to the long (3 C-C) scorpion toxin superfamily. In terms of assembly, monomer (edited version) and heterodimer (non-edited version) of this alpha chain and a beta chain (AC P0CI43). Expressed by the venom gland.

It is found in the secreted. In terms of biological role, the heterodimer non-edited LVP1 induces lipolysis in rat adipocytes. Induction of lipolysis by LVP1 appears to be mediated through the beta-2 adrenergic receptor pathway (ADRB2). The edited BmKBTx-like, similar to beta-toxins, may modulate voltage-gated sodium channels (Nav) and may block voltage-gated potassium channels (Kv). The polypeptide is Lipolysis-activating peptide 1-alpha chain (Lychas mucronatus (Chinese swimming scorpion)).